We begin with the raw amino-acid sequence, 100 residues long: MIPLSHAFSLSIILFILGLIAIIVRRDLLFILLGLEIMINAAASAFVIVGSFLGQSDGQIMYILVITLSASESAVSLALLLQLYRRYHTLHIDNISEMRG.

The next 3 membrane-spanning stretches (helical) occupy residues 4–24 (LSHA…AIIV), 29–49 (LFIL…FVIV), and 60–80 (IMYI…LALL).

It belongs to the complex I subunit 4L family. In terms of assembly, NDH-1 is composed of 13 different subunits. Subunits NuoA, H, J, K, L, M, N constitute the membrane sector of the complex.

It localises to the cell inner membrane. The enzyme catalyses a quinone + NADH + 5 H(+)(in) = a quinol + NAD(+) + 4 H(+)(out). Its function is as follows. NDH-1 shuttles electrons from NADH, via FMN and iron-sulfur (Fe-S) centers, to quinones in the respiratory chain. The immediate electron acceptor for the enzyme in this species is believed to be ubiquinone. Couples the redox reaction to proton translocation (for every two electrons transferred, four hydrogen ions are translocated across the cytoplasmic membrane), and thus conserves the redox energy in a proton gradient. The polypeptide is NADH-quinone oxidoreductase subunit K (Blochmanniella pennsylvanica (strain BPEN)).